Reading from the N-terminus, the 515-residue chain is Portal protein (515 aa).

Belongs to the podoviridae head-to-tail connector protein family. Homododecamer.

Its subcellular location is the virion. Its function is as follows. Forms the portal vertex of the capsid. This portal plays critical roles in head assembly, genome packaging, neck/tail attachment, and genome ejection. The portal protein multimerizes as a single ring-shaped homododecamer arranged around a central channel. The polypeptide is Portal protein (Salmonella typhimurium (Bacteriophage SP6)).